Consider the following 211-residue polypeptide: Thymidylate kinase (211 aa).

Residue 7 to 14 (GCEGSGKS) participates in ATP binding.

This sequence belongs to the thymidylate kinase family.

The catalysed reaction is dTMP + ATP = dTDP + ADP. Its function is as follows. Phosphorylation of dTMP to form dTDP in both de novo and salvage pathways of dTTP synthesis. In Chlamydia abortus (strain DSM 27085 / S26/3) (Chlamydophila abortus), this protein is Thymidylate kinase.